The sequence spans 1481 residues: Nucleoporin NUP159 (1481 aa).

2 WD repeats span residues 106 to 146 and 201 to 241; these read PLPL…QGNT and TLRS…AHIP. 6 PXFG repeats span residues 483-486, 493-496, 519-522, 524-527, 532-535, and 559-562; these read PTFG, PAFG, and PSFG. The segment covering 607–616 has biased composition (low complexity); the sequence is GSSIFSSKPG. 2 disordered regions span residues 607–647 and 662–991; these read GSSI…PAFG and TAAH…SLGG. A PXFG 7 repeat occupies 644-647; the sequence is PAFG. The segment covering 663 to 677 has biased composition (basic and acidic residues); it reads AAHDIEKPKEGESKS. Polar residues-rich tracts occupy residues 724–734 and 741–763; these read FESTTPTTTPA and KTTTPSGFSTLLGSTKPVASSMP. Basic and acidic residues predominate over residues 773–794; the sequence is SAEKPKSIFDTLKPKEESKENL. The segment covering 814-833 has biased composition (low complexity); the sequence is PGSSSSESAESSPGAAAKAA. Composition is skewed to basic and acidic residues over residues 837 to 850 and 862 to 877; these read GNDETPKPQKELAP and VKAKPKTEAKETKAEE. Residues 903-955 are compositionally biased toward acidic residues; that stretch reads ASEEEQGQAEEEEAESGEEEEEEEEEGEGEEEEEEEEEEEEEEEEGEEGEEQS. 2 coiled-coil regions span residues 903–957 and 1233–1318; these read ASEE…QSEA and MAAI…AARG. The Bipartite nuclear localization signal motif lies at 1345 to 1352; sequence EKRSGDID. Disordered stretches follow at residues 1385-1404 and 1414-1443; these read ATPGGGGRSRESSPFVTPQS and GSVGTATPRGLLAATGTPSPTKKKLSMYTA. A Bipartite nuclear localization signal motif is present at residues 1435-1442; it reads KKKLSMYT.

In terms of assembly, component of the nuclear pore complex (NPC). NPC constitutes the exclusive means of nucleocytoplasmic transport. NPCs allow the passive diffusion of ions and small molecules and the active, nuclear transport receptor-mediated bidirectional transport of macromolecules such as proteins, RNAs, ribonucleoparticles (RNPs), and ribosomal subunits across the nuclear envelope. Due to its 8-fold rotational symmetry, all subunits are present with 8 copies or multiples thereof.

The protein localises to the nucleus. It localises to the nuclear pore complex. Its subcellular location is the nucleus membrane. In terms of biological role, functions as a component of the nuclear pore complex (NPC). NPC components, collectively referred to as nucleoporins (NUPs), can play the role of both NPC structural components and of docking or interaction partners for transiently associated nuclear transport factors. Active directional transport is assured by both, a Phe-Gly (FG) repeat affinity gradient for these transport factors across the NPC and a transport cofactor concentration gradient across the nuclear envelope (GSP1 and GSP2 GTPases associated predominantly with GTP in the nucleus, with GDP in the cytoplasm). NUP159 plays an important role in several nuclear export pathways including poly(A)+ RNA, pre-ribosome, and protein export. The sequence is that of Nucleoporin NUP159 (NUP159) from Chaetomium thermophilum (strain DSM 1495 / CBS 144.50 / IMI 039719) (Thermochaetoides thermophila).